We begin with the raw amino-acid sequence, 301 residues long: MKIAILSQDPKLYSTRRLREAAENRHHDVQVINFMRCYMNITSHQPFVIYQGQRLENFDAIIPRIGASATFYGTAVVRQFEVMGGFSANTSQAISRSRDKLRSLQILARKGIGLPVTGFAHATQDIDGLIETVGGAPVVIKLLEGTQGIGVVLAETHQAAKSVIEAFRGLDANILVQEYIAEAKGTDIRCFVVGEKVVAAMKRQGAEGEFRSNLHRGGKADKVRLTPEERSTAVRAAKAMGLRVAGVDLLRSNHGPLVMEINSSPGLEGIEKTTGVDVAGKIIEYLEKNAAPGKTTDRIQY.

Residues 104–287 (LQILARKGIG…VAGKIIEYLE (184 aa)) enclose the ATP-grasp domain. ATP is bound by residues lysine 141, 178–179 (EY), aspartate 187, and 211–213 (RSN). The Mg(2+) site is built by aspartate 248, glutamate 260, and asparagine 262. 3 residues coordinate Mn(2+): aspartate 248, glutamate 260, and asparagine 262.

This sequence belongs to the RimK family. Requires Mg(2+) as cofactor. The cofactor is Mn(2+).

In Picosynechococcus sp. (strain ATCC 27264 / PCC 7002 / PR-6) (Agmenellum quadruplicatum), this protein is Probable alpha-L-glutamate ligase.